Consider the following 403-residue polypeptide: Nucleoporin nup44 (403 aa).

Composition is skewed to polar residues over residues 1 to 31 (MAFS…TTKP) and 67 to 124 (FGKT…DETN). The disordered stretch occupies residues 1–124 (MAFSFGQQGS…NPTKPVDETN (124 aa)).

The protein resides in the cytoplasm. It localises to the nucleus. In terms of biological role, functions as a component of the nuclear pore complex (NPC). NPC components, collectively referred to as nucleoporins (NUPs), can play the role of both NPC structural components and of docking or interaction partners for transiently associated nuclear transport factors. Active directional transport is assured by both, a Phe-Gly (FG) repeat affinity gradient for these transport factors across the NPC and a transport cofactor concentration gradient across the nuclear envelope. The chain is Nucleoporin nup44 (nup44) from Schizosaccharomyces pombe (strain 972 / ATCC 24843) (Fission yeast).